The sequence spans 198 residues: Small ribosomal subunit protein eS1 (198 aa).

It belongs to the eukaryotic ribosomal protein eS1 family.

The sequence is that of Small ribosomal subunit protein eS1 from Methanosphaerula palustris (strain ATCC BAA-1556 / DSM 19958 / E1-9c).